Reading from the N-terminus, the 990-residue chain is Bacteriophage adsorption protein A (990 aa).

The first 27 residues, 1-27, serve as a signal peptide directing secretion; it reads MKENNLNRVIGWSGLLLTSLLSTSALA. 3 TPR repeats span residues 81 to 114, 612 to 645, and 646 to 679; these read IPLT…HPGD, ANAY…EPNN, and SNTQ…LPDD.

(Microbial infection) Interacts with N4 phage non-contractile sheath protein; this interaction is essential for viral adsorption to the host.

The protein localises to the cell outer membrane. In terms of biological role, (Microbial infection) Allows N4 phage attachment by binding to the viral non-contractile sheath protein. This chain is Bacteriophage adsorption protein A (nfrA), found in Escherichia coli (strain K12).